The following is a 202-amino-acid chain: Orotate phosphoribosyltransferase (202 aa).

5-phospho-alpha-D-ribose 1-diphosphate contacts are provided by residues K93 and 113 to 121 (EDIITTGGS). Positions 117 and 145 each coordinate orotate.

Belongs to the purine/pyrimidine phosphoribosyltransferase family. PyrE subfamily. In terms of assembly, homodimer. Mg(2+) is required as a cofactor.

The enzyme catalyses orotidine 5'-phosphate + diphosphate = orotate + 5-phospho-alpha-D-ribose 1-diphosphate. It participates in pyrimidine metabolism; UMP biosynthesis via de novo pathway; UMP from orotate: step 1/2. In terms of biological role, catalyzes the transfer of a ribosyl phosphate group from 5-phosphoribose 1-diphosphate to orotate, leading to the formation of orotidine monophosphate (OMP). This is Orotate phosphoribosyltransferase from Campylobacter jejuni subsp. jejuni serotype O:23/36 (strain 81-176).